A 378-amino-acid polypeptide reads, in one-letter code: UPF0754 membrane protein Bcer98_0694 (378 aa).

The helical transmembrane segment at 358–378 threads the bilayer; that stretch reads LGALLGGTIGLMQGILLLFLM.

The protein belongs to the UPF0754 family.

The protein localises to the cell membrane. The sequence is that of UPF0754 membrane protein Bcer98_0694 from Bacillus cytotoxicus (strain DSM 22905 / CIP 110041 / 391-98 / NVH 391-98).